The primary structure comprises 205 residues: Casparian strip membrane protein 4 (205 aa).

At 1–58 (MDIEKTGSRREEEEPIVQKPKLEKGKGKAHVFAPPMNYSRIMEKHKQEKVSMAGWKRG) the chain is on the cytoplasmic side. Residues 59–79 (VAIFDFVLRLIAAITAMAAAA) form a helical membrane-spanning segment. Residues 80–109 (KMATTEETLPFFTQFLQFSADYTDLPTLSS) are Extracellular-facing. The helical transmembrane segment at 110-130 (FVIVNSIVGGYLTLSLPFSIV) threads the bilayer. The Cytoplasmic portion of the chain corresponds to 131 to 148 (CILRPLAVPPRLFLILCD). A helical transmembrane segment spans residues 149–169 (TAMMGLTMVAASASAAIVYLA). At 170–205 (HNGNSSSNWLPVCQQFGDFCKERVAPWWLPLLQRLF) the chain is on the extracellular side. An N-linked (GlcNAc...) asparagine glycan is attached at Asn173.

It belongs to the Casparian strip membrane proteins (CASP) family. Homodimer and heterodimers.

Its subcellular location is the cell membrane. Regulates membrane-cell wall junctions and localized cell wall deposition. Required for establishment of the Casparian strip membrane domain (CSD) and the subsequent formation of Casparian strips, a cell wall modification of the root endodermis that determines an apoplastic barrier between the intraorganismal apoplasm and the extraorganismal apoplasm and prevents lateral diffusion. This Raphanus sativus (Radish) protein is Casparian strip membrane protein 4.